The following is a 464-amino-acid chain: uncharacterized protein (464 aa).

Helical transmembrane passes span 7–27, 37–57, 94–114, 121–141, 153–173, 196–216, 231–251, 282–302, 329–349, 359–379, 401–421, and 432–452; these read VLNV…LRTL, LVFY…LVAA, VVWY…LIAP, FYLL…NCFG, ASIG…VWIF, LSLF…AVHA, FYSA…IVIV, VIAV…IIGP, VAIL…FILL, LSDL…AAAI, MSLI…VGFI, and FLFE…PWLF.

It belongs to the amino acid-polyamine-organocation (APC) superfamily.

Its subcellular location is the cell membrane. This is an uncharacterized protein from Legionella pneumophila subsp. pneumophila (strain Philadelphia 1 / ATCC 33152 / DSM 7513).